The chain runs to 500 residues: Bifunctional protein GlmU (500 aa).

The pyrophosphorylase stretch occupies residues 1 to 242 (MPVQTAVVVL…SAKVAGANDR (242 aa)). UDP-N-acetyl-alpha-D-glucosamine contacts are provided by residues 10 to 13 (LAAG), lysine 24, glutamine 81, and 86 to 87 (GT). Aspartate 112 contacts Mg(2+). UDP-N-acetyl-alpha-D-glucosamine is bound by residues glycine 151, glutamate 167, asparagine 182, and asparagine 240. Mg(2+) is bound at residue asparagine 240. The segment at 243–263 (VQLSRLAAELNRRTVENWMRA) is linker. Residues 264–500 (GVTVVDPSTT…KQDLKDGIEQ (237 aa)) are N-acetyltransferase. UDP-N-acetyl-alpha-D-glucosamine-binding residues include arginine 345 and lysine 363. Histidine 375 serves as the catalytic Proton acceptor. 2 residues coordinate UDP-N-acetyl-alpha-D-glucosamine: tyrosine 378 and asparagine 389. Acetyl-CoA-binding positions include alanine 392, 398-399 (NY), serine 417, and alanine 435. The disordered stretch occupies residues 459–500 (DGWVQRNRPGTPAAEAASAAGPHHSSDLHETEKQDLKDGIEQ). Residues 482 to 500 (HSSDLHETEKQDLKDGIEQ) show a composition bias toward basic and acidic residues.

It in the N-terminal section; belongs to the N-acetylglucosamine-1-phosphate uridyltransferase family. In the C-terminal section; belongs to the transferase hexapeptide repeat family. Homotrimer. The cofactor is Mg(2+).

It localises to the cytoplasm. The enzyme catalyses alpha-D-glucosamine 1-phosphate + acetyl-CoA = N-acetyl-alpha-D-glucosamine 1-phosphate + CoA + H(+). It catalyses the reaction N-acetyl-alpha-D-glucosamine 1-phosphate + UTP + H(+) = UDP-N-acetyl-alpha-D-glucosamine + diphosphate. It participates in nucleotide-sugar biosynthesis; UDP-N-acetyl-alpha-D-glucosamine biosynthesis; N-acetyl-alpha-D-glucosamine 1-phosphate from alpha-D-glucosamine 6-phosphate (route II): step 2/2. The protein operates within nucleotide-sugar biosynthesis; UDP-N-acetyl-alpha-D-glucosamine biosynthesis; UDP-N-acetyl-alpha-D-glucosamine from N-acetyl-alpha-D-glucosamine 1-phosphate: step 1/1. It functions in the pathway bacterial outer membrane biogenesis; LPS lipid A biosynthesis. Its function is as follows. Catalyzes the last two sequential reactions in the de novo biosynthetic pathway for UDP-N-acetylglucosamine (UDP-GlcNAc). The C-terminal domain catalyzes the transfer of acetyl group from acetyl coenzyme A to glucosamine-1-phosphate (GlcN-1-P) to produce N-acetylglucosamine-1-phosphate (GlcNAc-1-P), which is converted into UDP-GlcNAc by the transfer of uridine 5-monophosphate (from uridine 5-triphosphate), a reaction catalyzed by the N-terminal domain. This chain is Bifunctional protein GlmU, found in Rhodococcus opacus (strain B4).